The sequence spans 1086 residues: Sterol regulatory element-binding protein cleavage-activating protein (1086 aa).

Residues 1–35 (MRIFTLGKGRISRGYARQVNPSLFAKYSYCIANNP) are Cytoplasmic-facing. A helical membrane pass occupies residues 36–56 (WYFILVFTLLSITGIYSSLVA). Residues 57–229 (YQQSLYDQSL…TVVARIPDLT (173 aa)) lie on the Lumenal side of the membrane. Residues Asn94 and Asn168 are each glycosylated (N-linked (GlcNAc...) asparagine). Residues 230 to 250 (VIYRWYLWVGFGVGLFAYLYL) form a helical membrane-spanning segment. The region spanning 233–391 (RWYLWVGFGV…GSFFLAVLSV (159 aa)) is the SSD domain. Topologically, residues 251–265 (SLVRLHDIRAKFGLT) are cytoplasmic. A helical membrane pass occupies residues 266-286 (ATIFIQSGTAYFSTCSLLYFF). Topologically, residues 287–290 (ERTG) are lumenal. Residues 291–311 (PICPWPMAYYIIIFMDIENSF) traverse the membrane as a helical segment. The Cytoplasmic portion of the chain corresponds to 312–337 (RLLRAVIASPQTKRVPSRIMEGFSST). Residues 338–358 (IIASFSSLLKKLLTLFVLSFF) traverse the membrane as a helical segment. Over 359 to 367 (VYPLVQEFC) the chain is Lumenal. The chain crosses the membrane as a helical span at residues 368 to 388 (LFLACSFVVSFLLHGSFFLAV). The Cytoplasmic portion of the chain corresponds to 389 to 422 (LSVDIRRLELQDFLDSNSSNRNSKWWVPYLEYVR). An ER export signal motif is present at residues 396–401 (LELQDF). Residues 423-443 (FMWSPWIIDNLGTVSFHMYVI) form a helical membrane-spanning segment. Residues 444-544 (YLQLQSSTDI…FHDRRVWRWS (101 aa)) lie on the Lumenal side of the membrane. The N-linked (GlcNAc...) asparagine glycan is linked to Asn454. Residues 545–565 (TFFSILFAIDFAVGLLVKALL) form a helical membrane-spanning segment. Residues 566-1086 (RGWSDHDELS…QRKRSGTIGC (521 aa)) are Cytoplasmic-facing. WD repeat units lie at residues 593-632 (HHQLDILKIAVSENYKTFASVGLDRCLVVWDLRQWCTKLV), 637-675 (QMPRTLKAIALDPQGNYVSLFSKDTLFILNVESPCLMLQ), 680-727 (CKPN…EGAD), 736-776 (LSSP…WSPK), and 963-1009 (GHYN…KKHR). An interaction with sre1 region spans residues 640–1086 (RTLKAIALDP…QRKRSGTIGC (447 aa)).

The protein belongs to the WD repeat SCAP family. As to quaternary structure, forms a tight complex with scp1, composed of 4 copies of scp1 and 4 copies of sre1.

The protein resides in the endoplasmic reticulum membrane. Its subcellular location is the golgi apparatus membrane. Its function is as follows. Escort protein required for sre1 processing at low sterol as well as oxygen levels. May regulate export of the scp1/sre1 complex from the ER at low sterol or oxygen levels. 4-methyl sterols bound to scp1 may mask an ER export signal in scp1 leading to retention of the complex in the ER. Release of 4-methyl sterols may trigger a conformational change in the SSD domain of scp1 unmasking the ER export signal leading to recruitment into COPII-coated vesicles, transport to the Golgi complex, proteolytic cleavage of sre1 in the Golgi, release of the transcription factor fragment of sre1 from the membrane, its import into the nucleus and up-regulation of genes required for ergosterol biosynthesis as well as anaerobic growth. Binds 4-methyl sterols. The protein is Sterol regulatory element-binding protein cleavage-activating protein of Schizosaccharomyces pombe (strain 972 / ATCC 24843) (Fission yeast).